The following is a 94-amino-acid chain: Cyclin-dependent kinases regulatory subunit (94 aa).

Belongs to the CKS family. As to quaternary structure, forms a homohexamer that can probably bind six kinase subunits. Interacts with cdk-1.

Its subcellular location is the nucleus. In terms of biological role, binds to the catalytic subunit of the cyclin dependent kinases and is essential for their biological function. Has a role in the exit from M phase during early mitotic cell division. More specifically, thought to act by the degrading B-type cyclins that causes breakdown of nuclear envelope and exit mitosis. The polypeptide is Cyclin-dependent kinases regulatory subunit (Caenorhabditis briggsae).